A 393-amino-acid chain; its full sequence is Formate-dependent phosphoribosylglycinamide formyltransferase (393 aa).

N(1)-(5-phospho-beta-D-ribosyl)glycinamide contacts are provided by residues 22–23 (EL) and E82. ATP is bound by residues R114, K155, 160–165 (SSGKGQ), 195–198 (EGFI), and E203. An ATP-grasp domain is found at 119–308 (RLAAEELDLP…QFALHARAIL (190 aa)). Residues E267 and E279 each coordinate Mg(2+). Residues D286, K356, and 363–364 (RR) each bind N(1)-(5-phospho-beta-D-ribosyl)glycinamide.

Belongs to the PurK/PurT family. Homodimer.

The catalysed reaction is N(1)-(5-phospho-beta-D-ribosyl)glycinamide + formate + ATP = N(2)-formyl-N(1)-(5-phospho-beta-D-ribosyl)glycinamide + ADP + phosphate + H(+). It functions in the pathway purine metabolism; IMP biosynthesis via de novo pathway; N(2)-formyl-N(1)-(5-phospho-D-ribosyl)glycinamide from N(1)-(5-phospho-D-ribosyl)glycinamide (formate route): step 1/1. Its function is as follows. Involved in the de novo purine biosynthesis. Catalyzes the transfer of formate to 5-phospho-ribosyl-glycinamide (GAR), producing 5-phospho-ribosyl-N-formylglycinamide (FGAR). Formate is provided by PurU via hydrolysis of 10-formyl-tetrahydrofolate. In Pseudomonas fluorescens (strain ATCC BAA-477 / NRRL B-23932 / Pf-5), this protein is Formate-dependent phosphoribosylglycinamide formyltransferase.